The sequence spans 564 residues: Potassium-transporting ATPase potassium-binding subunit (564 aa).

10 helical membrane passes run 4–24 (YDYL…PWLG), 67–87 (TLAL…VLLL), 135–155 (IGLT…LVAL), 179–199 (LYGL…QGVP), 258–278 (FEVA…GHYV), 286–306 (AIIA…LWSE), 382–402 (AGLY…GLMI), 420–440 (LLVA…AIAA), 487–507 (VMIG…VLAL), and 534–554 (LLLL…LALG).

Belongs to the KdpA family. The system is composed of three essential subunits: KdpA, KdpB and KdpC.

The protein resides in the cell inner membrane. Its function is as follows. Part of the high-affinity ATP-driven potassium transport (or Kdp) system, which catalyzes the hydrolysis of ATP coupled with the electrogenic transport of potassium into the cytoplasm. This subunit binds the periplasmic potassium ions and delivers the ions to the membrane domain of KdpB through an intramembrane tunnel. This Pseudomonas entomophila (strain L48) protein is Potassium-transporting ATPase potassium-binding subunit.